We begin with the raw amino-acid sequence, 138 residues long: Basic phospholipase A2 RV-4 (138 aa).

The first 16 residues, 1 to 16 (MRTLWIVAVCLIGVEG), serve as a signal peptide directing secretion. Disulfide bonds link Cys-42–Cys-131, Cys-44–Cys-60, Cys-59–Cys-111, Cys-65–Cys-138, Cys-66–Cys-104, Cys-73–Cys-97, and Cys-91–Cys-102. The Ca(2+) site is built by Tyr-43, Gly-45, and Gly-47. His-63 is a catalytic residue. Asp-64 contacts Ca(2+). Residue Asp-105 is part of the active site.

It belongs to the phospholipase A2 family. Group II subfamily. D49 sub-subfamily. In terms of assembly, heterodimer of a weakly toxic basic protein having phospholipase A2 activity (RV-4) and a non-toxic acidic protein which inhibits its enzymatic activity but potentiates its lethal potency and neurotoxicity (RV-7). Ca(2+) serves as cofactor. As to expression, expressed by the venom gland.

It is found in the secreted. The catalysed reaction is a 1,2-diacyl-sn-glycero-3-phosphocholine + H2O = a 1-acyl-sn-glycero-3-phosphocholine + a fatty acid + H(+). Its function is as follows. Heterodimer RV-4/RV-7: acts as a presynaptic neurotoxin. In terms of biological role, monomer: snake venom phospholipase A2 (PLA2) that acts as a presynaptic neurotoxin. PLA2 catalyzes the calcium-dependent hydrolysis of the 2-acyl groups in 3-sn-phosphoglycerides. This is Basic phospholipase A2 RV-4 from Daboia siamensis (Eastern Russel's viper).